We begin with the raw amino-acid sequence, 556 residues long: Arginine--tRNA ligase (556 aa).

The 'HIGH' region signature appears at 132 to 142 (ANPTGSLHLGH).

The protein belongs to the class-I aminoacyl-tRNA synthetase family. In terms of assembly, monomer.

The protein localises to the cytoplasm. It carries out the reaction tRNA(Arg) + L-arginine + ATP = L-arginyl-tRNA(Arg) + AMP + diphosphate. The chain is Arginine--tRNA ligase from Anoxybacillus flavithermus (strain DSM 21510 / WK1).